The primary structure comprises 377 residues: MSWSFLTRLLEEINNHSTFVGKVWLTVLIIFRIVLTAVGGESIYYDEQSKFTCNTQQPGCENVCYDAFAPLSHVRFWVFQIILITTPSIMYLGFAMHRIARQPEMQIRRSEKTKSKKRAPIIHRGAMRDYEEAEDNQEEDPMICEEEEPEKDSEKGDKKKHDGRRRIKQDGLMKVYVLQLLFRSVFEVGFLMGQYILYGFEVIPFFVCSRKPCPHTVDCFVSRPTEKTIFLLIMYAVSALCLFLNLCELFHLGIGGIRDALRQKKKELQESRKKTPSAPPNYHSVLKKGRLPNGKPVFPGNGVSEGFELPTHELDRLRQHLKLAQEHLDLAFHLNPTGDNTHASRSSSPESNSIAAEQNRLNLAQEKGVGNREKSGL.

The Cytoplasmic portion of the chain corresponds to 1–18 (MSWSFLTRLLEEINNHST). The helical transmembrane segment at 19 to 39 (FVGKVWLTVLIIFRIVLTAVG) threads the bilayer. The Extracellular segment spans residues 40–75 (GESIYYDEQSKFTCNTQQPGCENVCYDAFAPLSHVR). Residues 76 to 96 (FWVFQIILITTPSIMYLGFAM) form a helical membrane-spanning segment. Residues 97–174 (HRIARQPEMQ…RRIKQDGLMK (78 aa)) are Cytoplasmic-facing. The disordered stretch occupies residues 129-163 (DYEEAEDNQEEDPMICEEEEPEKDSEKGDKKKHDG). Positions 131 to 151 (EEAEDNQEEDPMICEEEEPEK) are enriched in acidic residues. Residues 175 to 197 (VYVLQLLFRSVFEVGFLMGQYIL) traverse the membrane as a helical segment. Over 198 to 228 (YGFEVIPFFVCSRKPCPHTVDCFVSRPTEKT) the chain is Extracellular. The helical transmembrane segment at 229 to 249 (IFLLIMYAVSALCLFLNLCEL) threads the bilayer. Topologically, residues 250–377 (FHLGIGGIRD…GVGNREKSGL (128 aa)) are cytoplasmic. 2 disordered regions span residues 265–294 (KKELQESRKKTPSAPPNYHSVLKKGRLPNG) and 334–377 (LNPT…KSGL). Residues 337-362 (TGDNTHASRSSSPESNSIAAEQNRLN) show a composition bias toward polar residues.

The protein belongs to the connexin family. Gamma-type subfamily. A connexon is composed of a hexamer of connexins.

It localises to the cell membrane. Its subcellular location is the cell junction. The protein resides in the gap junction. Its function is as follows. One gap junction consists of a cluster of closely packed pairs of transmembrane channels, the connexons, through which materials of low MW diffuse from one cell to a neighboring cell. The polypeptide is Gap junction gamma-1 protein (gjc1) (Xenopus tropicalis (Western clawed frog)).